Here is a 274-residue protein sequence, read N- to C-terminus: Nitrogenase iron protein (274 aa).

8 to 15 (GKGGIGKS) is a binding site for ATP. Residue Cys-94 coordinates [4Fe-4S] cluster. Arg-97 bears the ADP-ribosylarginine; by dinitrogenase reductase ADP-ribosyltransferase mark. [4Fe-4S] cluster is bound at residue Cys-131.

Belongs to the NifH/BchL/ChlL family. As to quaternary structure, homodimer. Requires [4Fe-4S] cluster as cofactor. The reversible ADP-ribosylation of Arg-97 inactivates the nitrogenase reductase and regulates nitrogenase activity.

The enzyme catalyses N2 + 8 reduced [2Fe-2S]-[ferredoxin] + 16 ATP + 16 H2O = H2 + 8 oxidized [2Fe-2S]-[ferredoxin] + 2 NH4(+) + 16 ADP + 16 phosphate + 6 H(+). Functionally, the key enzymatic reactions in nitrogen fixation are catalyzed by the nitrogenase complex, which has 2 components: the iron protein and the molybdenum-iron protein. This chain is Nitrogenase iron protein, found in Azobacteroides pseudotrichonymphae genomovar. CFP2.